Here is a 198-residue protein sequence, read N- to C-terminus: Recombination protein RecR (198 aa).

A C4-type zinc finger spans residues 57–72; sequence CAQCRTLTEHSLCEYC. The 96-residue stretch at 80–175 folds into the Toprim domain; that stretch reads SLLCIVESPA…RTTRIAHGIP (96 aa).

Belongs to the RecR family.

Functionally, may play a role in DNA repair. It seems to be involved in an RecBC-independent recombinational process of DNA repair. It may act with RecF and RecO. The protein is Recombination protein RecR of Methylococcus capsulatus (strain ATCC 33009 / NCIMB 11132 / Bath).